The primary structure comprises 268 residues: Putative hydro-lyase A1S_1268 (268 aa).

It belongs to the D-glutamate cyclase family.

This Acinetobacter baumannii (strain ATCC 17978 / DSM 105126 / CIP 53.77 / LMG 1025 / NCDC KC755 / 5377) protein is Putative hydro-lyase A1S_1268.